The primary structure comprises 69 residues: Pancreatic propolypeptide YG (69 aa).

Belongs to the NPY family.

The protein resides in the secreted. This chain is Pancreatic propolypeptide YG, found in Lophius americanus (American angler).